A 247-amino-acid chain; its full sequence is Pyridoxine 5'-phosphate synthase (247 aa).

N12 contacts 3-amino-2-oxopropyl phosphate. 14-15 provides a ligand contact to 1-deoxy-D-xylulose 5-phosphate; sequence DH. R23 serves as a coordination point for 3-amino-2-oxopropyl phosphate. The Proton acceptor role is filled by H48. 1-deoxy-D-xylulose 5-phosphate-binding residues include R50 and H55. E75 acts as the Proton acceptor in catalysis. T105 is a 1-deoxy-D-xylulose 5-phosphate binding site. H196 (proton donor) is an active-site residue. 3-amino-2-oxopropyl phosphate contacts are provided by residues G197 and 218–219; that span reads GH.

Belongs to the PNP synthase family. In terms of assembly, homooctamer; tetramer of dimers.

The protein resides in the cytoplasm. The catalysed reaction is 3-amino-2-oxopropyl phosphate + 1-deoxy-D-xylulose 5-phosphate = pyridoxine 5'-phosphate + phosphate + 2 H2O + H(+). The protein operates within cofactor biosynthesis; pyridoxine 5'-phosphate biosynthesis; pyridoxine 5'-phosphate from D-erythrose 4-phosphate: step 5/5. Functionally, catalyzes the complicated ring closure reaction between the two acyclic compounds 1-deoxy-D-xylulose-5-phosphate (DXP) and 3-amino-2-oxopropyl phosphate (1-amino-acetone-3-phosphate or AAP) to form pyridoxine 5'-phosphate (PNP) and inorganic phosphate. This is Pyridoxine 5'-phosphate synthase from Pseudomonas fluorescens (strain Pf0-1).